Reading from the N-terminus, the 606-residue chain is Protein couch potato (606 aa).

Positions 81-105 (IKRRPTLPQTPASAPQVLSPSPKRQ) match the Nuclear localization signal motif. Tandem repeats lie at residues 91–95 (PASAP), 109–113 (AVSVL), 114–118 (PVTVP), 122–126 (PVSVP), 128–132 (PVSVP), 134–138 (PVSVK), and 159–163 (PISHP). The 7 X 5 AA approximate repeats of P-V-S-V-P stretch occupies residues 91–164 (PASAPQVLSP…SHSHPISHPH (74 aa)). 4 disordered regions span residues 147–166 (QIAH…PHHH), 282–311 (QQQQ…AGAA), 324–365 (VPTT…TSAA), and 388–410 (PATS…NSNS). Low complexity predominate over residues 344 to 365 (SNSATASAPTTPSPAGSVTSAA). Positions 442–524 (RTLFVSGLPM…QTIRLEFAKS (83 aa)) constitute an RRM domain.

In terms of tissue distribution, expressed in neural precursors and their daughter cells in the embryonic peripheral nervous system. Less abundant in a number of glial cells in the peripheral and central nervous systems and also present at low levels in the developing gut.

It localises to the nucleus. In terms of biological role, may play a role in the development or function of the peripheral nervous system by regulating the processing of nervous system-specific transcripts. The protein is Protein couch potato (cpo) of Drosophila melanogaster (Fruit fly).